We begin with the raw amino-acid sequence, 364 residues long: Phosphoserine aminotransferase (364 aa).

Arginine 46 is an L-glutamate binding site. Residues 80-81 (AR), tryptophan 106, threonine 157, aspartate 176, and glutamine 199 each bind pyridoxal 5'-phosphate. Residue lysine 200 is modified to N6-(pyridoxal phosphate)lysine. Pyridoxal 5'-phosphate is bound at residue 241 to 242 (NT).

Belongs to the class-V pyridoxal-phosphate-dependent aminotransferase family. SerC subfamily. In terms of assembly, homodimer. It depends on pyridoxal 5'-phosphate as a cofactor.

It is found in the cytoplasm. It catalyses the reaction O-phospho-L-serine + 2-oxoglutarate = 3-phosphooxypyruvate + L-glutamate. The enzyme catalyses 4-(phosphooxy)-L-threonine + 2-oxoglutarate = (R)-3-hydroxy-2-oxo-4-phosphooxybutanoate + L-glutamate. It functions in the pathway amino-acid biosynthesis; L-serine biosynthesis; L-serine from 3-phospho-D-glycerate: step 2/3. The protein operates within cofactor biosynthesis; pyridoxine 5'-phosphate biosynthesis; pyridoxine 5'-phosphate from D-erythrose 4-phosphate: step 3/5. Its function is as follows. Catalyzes the reversible conversion of 3-phosphohydroxypyruvate to phosphoserine and of 3-hydroxy-2-oxo-4-phosphonooxybutanoate to phosphohydroxythreonine. The sequence is that of Phosphoserine aminotransferase from Vibrio vulnificus (strain YJ016).